The chain runs to 245 residues: Probable transcriptional regulatory protein pc1328 (245 aa).

This sequence belongs to the TACO1 family.

Its subcellular location is the cytoplasm. The polypeptide is Probable transcriptional regulatory protein pc1328 (Protochlamydia amoebophila (strain UWE25)).